The sequence spans 585 residues: Zinc finger protein 496 (585 aa).

Residues 1 to 41 (MPTALCPRVLAPKESEEPRKMRSPPGENPSPQGEPPSPESS) are disordered. The segment covering 11 to 20 (APKESEEPRK) has biased composition (basic and acidic residues). Lysine 13 participates in a covalent cross-link: Glycyl lysine isopeptide (Lys-Gly) (interchain with G-Cter in SUMO2). A compositionally biased stretch (pro residues) spans 26-38 (GENPSPQGEPPSP). The SCAN box domain occupies 42–124 (RRLFRRFRYQ…AAVEALEREP (83 aa)). A disordered region spans residues 141–167 (DDGDGPAAPQDLEQERMSAESQSYPDA). Serine 182 is subject to Phosphoserine. Residues 220–294 (SPFKDMILCF…DLQDKEIPQA (75 aa)) enclose the KRAB domain. The interval 358–397 (SSSGDEDSQHSPYCTEELRSPPEDLHSVPAHQSNASAEGE) is disordered. A compositionally biased stretch (basic and acidic residues) spans 373 to 383 (EELRSPPEDLH). Positions 387 to 397 (AHQSNASAEGE) are enriched in polar residues. A C2H2-type 1; degenerate zinc finger spans residues 405–427 (YVCPNCGKIFRWRVNFIRHLRSR). 2 consecutive C2H2-type zinc fingers follow at residues 433 to 455 (HKCS…LETH) and 461 to 483 (YRCT…RRIH). A disordered region spans residues 483 to 506 (HLQPASQQPMKKSEEEALETEGTG). A Glycyl lysine isopeptide (Lys-Gly) (interchain with G-Cter in SUMO2) cross-link involves residue lysine 494. 2 consecutive C2H2-type zinc fingers follow at residues 520–543 (FQCG…RHCH) and 551–573 (FQCR…ERLH). The Nuclear localization signal motif lies at 575 to 579 (KRRSK).

Belongs to the krueppel C2H2-type zinc-finger protein family. In terms of assembly, interacts (via zinc-fingers) with JARID2. Interacts with NSD1.

Its subcellular location is the nucleus. Its function is as follows. DNA-binding transcription factor that can both act as an activator and a repressor. The protein is Zinc finger protein 496 (Znf496) of Mus musculus (Mouse).